A 563-amino-acid chain; its full sequence is Arginine--tRNA ligase (563 aa).

Positions 120-130 (PNIAKPFHIGH) match the 'HIGH' region motif.

Belongs to the class-I aminoacyl-tRNA synthetase family. As to quaternary structure, monomer.

Its subcellular location is the cytoplasm. It catalyses the reaction tRNA(Arg) + L-arginine + ATP = L-arginyl-tRNA(Arg) + AMP + diphosphate. The sequence is that of Arginine--tRNA ligase from Clostridium botulinum (strain Loch Maree / Type A3).